The primary structure comprises 606 residues: Threonine dehydratase 1 biosynthetic, chloroplastic (606 aa).

Lys154 is subject to N6-(pyridoxal phosphate)lysine. ACT-like domains lie at 432 to 504 and 526 to 597; these read AVLA…NLTD and LLCR…MESL.

The protein belongs to the serine/threonine dehydratase family. Pyridoxal 5'-phosphate is required as a cofactor. In terms of tissue distribution, expressed constitutively in all tissues examined including root, stem, petiole, leaf, immature flower bud, unopened flower and opened flower with the highest expression in opened flower and lowest in leaf.

It localises to the plastid. Its subcellular location is the chloroplast. The enzyme catalyses L-threonine = 2-oxobutanoate + NH4(+). It functions in the pathway amino-acid biosynthesis; L-isoleucine biosynthesis; 2-oxobutanoate from L-threonine: step 1/1. With respect to regulation, strongly inhibited by 1 mM isoleucine. Functionally, has a housekeeping role in isoleucine biosynthesis. This is Threonine dehydratase 1 biosynthetic, chloroplastic from Solanum lycopersicum (Tomato).